The following is a 131-amino-acid chain: MSVSQTIVGNGRKIVSFNLQGIDKVLPYIAKRIAWAAKLSGIKTVGPLPLPSTSRQWTVNKSPHTDKHSRDQYEMKVNKRLVQIDAPVQTADMFVKFVQTKLPPISATVDIKIEERVYLPTEDFYSDKRIA.

Belongs to the universal ribosomal protein uS10 family.

It localises to the mitochondrion. The polypeptide is Small ribosomal subunit protein uS10m (mrps10) (Dictyostelium discoideum (Social amoeba)).